Consider the following 290-residue polypeptide: Protease HtpX homolog (290 aa).

2 consecutive transmembrane segments (helical) span residues 4 to 24 (IFLFIATNIAVIAVMSVVLSL) and 39 to 59 (PMLLVFSLVVGFTGSIISLLI). Position 144 (H144) interacts with Zn(2+). E145 is a catalytic residue. H148 contributes to the Zn(2+) binding site. Transmembrane regions (helical) follow at residues 159-179 (LVQGVVNTFVVFLSRVVGYFV) and 197-217 (ITVIVSQIVFGIAASVIVAWF). Residue E222 coordinates Zn(2+).

This sequence belongs to the peptidase M48B family. Zn(2+) is required as a cofactor.

Its subcellular location is the cell inner membrane. The polypeptide is Protease HtpX homolog (Janthinobacterium sp. (strain Marseille) (Minibacterium massiliensis)).